The sequence spans 154 residues: Transcriptional repressor NrdR (154 aa).

A zinc finger spans residues 3–34 (CPFCGANDTKVIDSRLVAEGEQVRRRRECVAC). The ATP-cone domain occupies 49–139 (PRLIKQDGTR…VYRRFQDLDE (91 aa)).

This sequence belongs to the NrdR family. Zn(2+) serves as cofactor.

Functionally, negatively regulates transcription of bacterial ribonucleotide reductase nrd genes and operons by binding to NrdR-boxes. The sequence is that of Transcriptional repressor NrdR from Pseudomonas putida (strain W619).